We begin with the raw amino-acid sequence, 182 residues long: NAD(P)H-quinone oxidoreductase subunit I, chloroplastic (182 aa).

4Fe-4S ferredoxin-type domains follow at residues 55–84 and 95–124; these read GRIH…VDWK and LNYS…MTEE. 8 residues coordinate [4Fe-4S] cluster: Cys-64, Cys-67, Cys-70, Cys-74, Cys-104, Cys-107, Cys-110, and Cys-114.

Belongs to the complex I 23 kDa subunit family. As to quaternary structure, NDH is composed of at least 16 different subunits, 5 of which are encoded in the nucleus. The cofactor is [4Fe-4S] cluster.

The protein resides in the plastid. The protein localises to the chloroplast thylakoid membrane. It catalyses the reaction a plastoquinone + NADH + (n+1) H(+)(in) = a plastoquinol + NAD(+) + n H(+)(out). The enzyme catalyses a plastoquinone + NADPH + (n+1) H(+)(in) = a plastoquinol + NADP(+) + n H(+)(out). NDH shuttles electrons from NAD(P)H:plastoquinone, via FMN and iron-sulfur (Fe-S) centers, to quinones in the photosynthetic chain and possibly in a chloroplast respiratory chain. The immediate electron acceptor for the enzyme in this species is believed to be plastoquinone. Couples the redox reaction to proton translocation, and thus conserves the redox energy in a proton gradient. The polypeptide is NAD(P)H-quinone oxidoreductase subunit I, chloroplastic (Buxus microphylla (Littleleaf boxwood)).